The following is a 626-amino-acid chain: UvrABC system protein C (626 aa).

In terms of domain architecture, GIY-YIG spans 26-105 (PEPGVYFMRD…IKQHQPHFNV (80 aa)). The UVR domain maps to 215–250 (SELINTLSLQMEQAAEDLNFEQAARLRDQIKGLQGL).

This sequence belongs to the UvrC family. In terms of assembly, interacts with UvrB in an incision complex.

The protein resides in the cytoplasm. In terms of biological role, the UvrABC repair system catalyzes the recognition and processing of DNA lesions. UvrC both incises the 5' and 3' sides of the lesion. The N-terminal half is responsible for the 3' incision and the C-terminal half is responsible for the 5' incision. The protein is UvrABC system protein C of Acaryochloris marina (strain MBIC 11017).